Consider the following 275-residue polypeptide: Large ribosomal subunit protein uL2 (275 aa).

Disordered regions lie at residues 36-55 (PKKR…RHKG) and 223-275 (VVMN…RHAR).

Belongs to the universal ribosomal protein uL2 family. Part of the 50S ribosomal subunit. Forms a bridge to the 30S subunit in the 70S ribosome.

One of the primary rRNA binding proteins. Required for association of the 30S and 50S subunits to form the 70S ribosome, for tRNA binding and peptide bond formation. It has been suggested to have peptidyltransferase activity; this is somewhat controversial. Makes several contacts with the 16S rRNA in the 70S ribosome. The protein is Large ribosomal subunit protein uL2 of Thiobacillus denitrificans (strain ATCC 25259 / T1).